Consider the following 284-residue polypeptide: Deoxyribonuclease-1 (284 aa).

The N-terminal stretch at 1–22 is a signal peptide; sequence MRGARLMGALLALAGLLQGALA. N-linked (GlcNAc...) asparagine glycosylation occurs at asparagine 40. Glutamate 100 is an active-site residue. Cysteine 123 and cysteine 126 are oxidised to a cystine. Asparagine 128 carries an N-linked (GlcNAc...) asparagine glycan. Residue histidine 156 is part of the active site. A disulfide bridge connects residues cysteine 195 and cysteine 231.

This sequence belongs to the DNase I family. Ca(2+) serves as cofactor. It depends on Mg(2+) as a cofactor. Highest expression in pancreas.

It localises to the secreted. The protein resides in the zymogen granule. Its subcellular location is the nucleus envelope. The enzyme catalyses Endonucleolytic cleavage to 5'-phosphodinucleotide and 5'-phosphooligonucleotide end-products.. Serum endocuclease secreted into body fluids by a wide variety of exocrine and endocrine organs. Expressed by non-hematopoietic tissues and preferentially cleaves protein-free DNA. Among other functions, seems to be involved in cell death by apoptosis. Binds specifically to G-actin and blocks actin polymerization. Together with DNASE1L3, plays a key role in degrading neutrophil extracellular traps (NETs). NETs are mainly composed of DNA fibers and are released by neutrophils to bind pathogens during inflammation. Degradation of intravascular NETs by DNASE1 and DNASE1L3 is required to prevent formation of clots that obstruct blood vessels and cause organ damage following inflammation. This chain is Deoxyribonuclease-1 (DNASE1), found in Canis lupus familiaris (Dog).